The following is a 1171-amino-acid chain: Pyruvate-flavodoxin oxidoreductase (1171 aa).

2 4Fe-4S ferredoxin-type domains span residues 682–711 and 736–767; these read EVPV…PALL and YHLA…MQSL. 12 residues coordinate [4Fe-4S] cluster: Cys691, Cys694, Cys697, Cys701, Cys745, Cys748, Cys751, Cys755, Cys811, Cys814, Cys839, and Cys1072.

Belongs to the pyruvate:ferredoxin/flavodoxin oxidoreductase family. The cofactor is [4Fe-4S] cluster.

The enzyme catalyses oxidized [flavodoxin] + pyruvate + CoA + 2 H(+) = reduced [flavodoxin] + acetyl-CoA + CO2. Oxidoreductase required for the transfer of electrons from pyruvate to flavodoxin, which reduces nitrogenase. This is Pyruvate-flavodoxin oxidoreductase (nifJ) from Klebsiella pneumoniae.